The chain runs to 122 residues: MIQNESYLNVADNSGAKKLRVIRVMGGFHKKYGTVGDIVVCSVRDVVPNTGIKKGEVVKAVIVRTKKPVRRPDGTYIRFDDNAAVLIDKFNEPRGTRVFGPVAREIREKGYMKIISLAPEVL.

Belongs to the universal ribosomal protein uL14 family. As to quaternary structure, part of the 50S ribosomal subunit. Forms a cluster with proteins L3 and L19. In the 70S ribosome, L14 and L19 interact and together make contacts with the 16S rRNA in bridges B5 and B8.

Its function is as follows. Binds to 23S rRNA. Forms part of two intersubunit bridges in the 70S ribosome. The sequence is that of Large ribosomal subunit protein uL14 from Pseudothermotoga lettingae (strain ATCC BAA-301 / DSM 14385 / NBRC 107922 / TMO) (Thermotoga lettingae).